The following is a 321-amino-acid chain: Methionyl-tRNA formyltransferase (321 aa).

113 to 116 (SILP) is a (6S)-5,6,7,8-tetrahydrofolate binding site.

It belongs to the Fmt family.

It catalyses the reaction L-methionyl-tRNA(fMet) + (6R)-10-formyltetrahydrofolate = N-formyl-L-methionyl-tRNA(fMet) + (6S)-5,6,7,8-tetrahydrofolate + H(+). Its function is as follows. Attaches a formyl group to the free amino group of methionyl-tRNA(fMet). The formyl group appears to play a dual role in the initiator identity of N-formylmethionyl-tRNA by promoting its recognition by IF2 and preventing the misappropriation of this tRNA by the elongation apparatus. The sequence is that of Methionyl-tRNA formyltransferase from Vibrio atlanticus (strain LGP32) (Vibrio splendidus (strain Mel32)).